Reading from the N-terminus, the 110-residue chain is MSHHPHSLRNSCLIRMDLLYWQFTIYTITFCFSHLSGRLTLSAQHISHRPCLLSYSLLFWKVHHLFLEGFPCSPRLDEMSFHQFPQHPVHVSVVHLPIVYKGSMTQVSPH.

This is an uncharacterized protein from Homo sapiens (Human).